The following is a 437-amino-acid chain: Coiled-coil domain-containing protein 78 (437 aa).

Coiled coils occupy residues 83-114 (HLRE…LHGN), 147-287 (EELK…QRQE), and 360-408 (QRLQ…YKQE).

This sequence belongs to the CCDC78 family.

The protein localises to the cytoplasm. It localises to the cytoskeleton. The protein resides in the microtubule organizing center. It is found in the centrosome. Its subcellular location is the centriole. The protein localises to the perinuclear region. It localises to the cell membrane. The protein resides in the sarcolemma. It is found in the sarcoplasmic reticulum. Its function is as follows. Component of the deuterosome, a structure that promotes de novo centriole amplification in multiciliated cells that can generate more than 100 centrioles. Deuterosome-mediated centriole amplification occurs in terminally differentiated multiciliated cells (G1/0) and not in S phase. Essential for centriole amplification and is required for CEP152 localization to the deuterosome. The polypeptide is Coiled-coil domain-containing protein 78 (Ccdc78) (Mus musculus (Mouse)).